A 962-amino-acid chain; its full sequence is Vacuolar membrane protease (962 aa).

Over 1-15 (MVSSRRGFNPIAFTP) the chain is Cytoplasmic. Residues 16-36 (WPVTILSSLVYLALIIPIIVV) form a helical membrane-spanning segment. Residues 37–390 (HHLVPPAPKE…FQLNTLFGHS (354 aa)) lie on the Vacuolar side of the membrane. Residues Asn-110 and Asn-113 are each glycosylated (N-linked (GlcNAc...) asparagine). Positions 169 and 181 each coordinate Zn(2+). Glu-215 serves as the catalytic Proton acceptor. 3 residues coordinate Zn(2+): Glu-216, Glu-241, and His-314. The chain crosses the membrane as a helical span at residues 391 to 411 (VALLVVAPLLLIITSVALFAV). The Cytoplasmic portion of the chain corresponds to 412 to 440 (DKMYMFSMYTYISESGGQVSLYGLRGMFR). The chain crosses the membrane as a helical span at residues 441-461 (FPLILGISTALTIALAFLIMK). Residues 462-472 (VNPFIIYSSPY) are Vacuolar-facing. A helical transmembrane segment spans residues 473 to 493 (AVWSMMLSTCMFFAWFISCVA). Over 494 to 503 (DFARPSALHR) the chain is Cytoplasmic. A helical membrane pass occupies residues 504 to 524 (AYSFSWMFGIMWVFLVIATVY). Over 525 to 534 (QKQHGIASSY) the chain is Vacuolar. Residues 535 to 555 (FIVFYFAGVAVATWISYLELF) traverse the membrane as a helical segment. Residues 556–667 (GLPKTQDYAR…WSIYLMSSAW (112 aa)) lie on the Cytoplasmic side of the membrane. A disordered region spans residues 568 to 617 (GRLSDRTPSSDSHFLAPSADELPSSSSAAGRDFNPEDVEDEEPTESTSLL). The segment covering 602 to 611 (PEDVEDEEPT) has biased composition (acidic residues). The chain crosses the membrane as a helical span at residues 668–688 (ILQFLLVAPIVIILLGQLGLF). The Vacuolar portion of the chain corresponds to 689 to 704 (LTSATYQIGADGGSQL). A helical membrane pass occupies residues 705-725 (VIYIGIAVLSVLILLPLFPFI). The Cytoplasmic portion of the chain corresponds to 726–731 (HRFTYH). A helical membrane pass occupies residues 732-752 (IPTFLLFILIGTLVYNLTAFP). Residues 753-962 (FSHSNRLKLA…LVEGSYSFKL (210 aa)) are Vacuolar-facing. Asn-834 is a glycosylation site (N-linked (GlcNAc...) asparagine).

Belongs to the peptidase M28 family. Requires Zn(2+) as cofactor.

The protein resides in the vacuole membrane. In terms of biological role, may be involved in vacuolar sorting and osmoregulation. The polypeptide is Vacuolar membrane protease (Arthroderma benhamiae (strain ATCC MYA-4681 / CBS 112371) (Trichophyton mentagrophytes)).